The sequence spans 537 residues: Tyrosine-protein phosphatase CDC14 homolog (537 aa).

In terms of domain architecture, Tyrosine-protein phosphatase spans 182-345 (DFNWISPKFI…QVHFRAYFYE (164 aa)). Cys286 serves as the catalytic Phosphocysteine intermediate. The tract at residues 359-537 (EPLATPPRHP…PKPSKSRLIS (179 aa)) is disordered. Residues 370 to 382 (NATNGTSQSNIST) are compositionally biased toward polar residues. Positions 400 to 411 (PPSARRLPSASS) are enriched in low complexity. Positions 421 to 437 (ASKQSIQNENKASYSSY) are enriched in polar residues. Position 453 is a phosphothreonine (Thr453). A phosphoserine mark is found at Ser468 and Ser470. Residues 490-502 (RRTSGNRWSSGSS) are compositionally biased toward low complexity. Ser513 carries the phosphoserine modification. The segment covering 514 to 523 (MSSLNNTSNG) has biased composition (polar residues). A compositionally biased stretch (basic residues) spans 526-537 (AKPKPSKSRLIS).

Belongs to the protein-tyrosine phosphatase family. Non-receptor class CDC14 subfamily. In terms of assembly, interacts with ark1 at the kinetochores. Interacts with bir1, cdc25, mid1, nbl1, pic1, and rad24. Post-translationally, phosphorylated by cds1, chk1, pmk1, and cdc2 upon Hydroxylurea and H(2)O(2) stress treatment. Phosphorylation regulates the nucleolar-to-nucleoplasmic transition. Is able to autodephosphorylate.

The protein resides in the nucleus. The protein localises to the nucleolus. Its subcellular location is the cytoplasm. It is found in the cytoskeleton. It localises to the microtubule organizing center. The protein resides in the spindle pole body. The catalysed reaction is O-phospho-L-tyrosyl-[protein] + H2O = L-tyrosyl-[protein] + phosphate. Functionally, protein phosphatase which antagonizes mitotic cyclin-dependent kinase cdc2, the inactivation of which is essential for exit from mitosis. To access its substrates, is released from nucleolar sequestration during mitosis. Plays an essential in coordinating the nuclear division cycle with cytokinesis through the cytokinesis checkpoint. Involved in chromosome segregation, where it is required for meiosis I spindle dissambly as well as for establishing two consecutive chromosome segregation phases. Allows damaged actomyosin rings to be maintained to facilitate completion of cell division in response to minor perturbation of the cell division machinery. Dephosphorylates the mitotic inducer cdc25 for its rapid degradation. Down-regulation of cdc25 activity ensures a prompt inactivation of mitotic cdc2 complexes to trigger cell division. Also dephosphorylates cdc2-phosphorylated nsk1, allowing nsk1-binding to kinetochores and spindle. Dephosphorylates ase1, which is essential for spindle midzone assembly and for continuous extension of the anaphase spindle. Tethered to the contractile ring by mid1, where it dephosphorylates cdc15. This chain is Tyrosine-protein phosphatase CDC14 homolog (clp1), found in Schizosaccharomyces pombe (strain 972 / ATCC 24843) (Fission yeast).